Here is a 316-residue protein sequence, read N- to C-terminus: Transaldolase (316 aa).

Catalysis depends on K132, which acts as the Schiff-base intermediate with substrate.

It belongs to the transaldolase family. Type 1 subfamily. In terms of assembly, homodimer.

The protein localises to the cytoplasm. It catalyses the reaction D-sedoheptulose 7-phosphate + D-glyceraldehyde 3-phosphate = D-erythrose 4-phosphate + beta-D-fructose 6-phosphate. The protein operates within carbohydrate degradation; pentose phosphate pathway; D-glyceraldehyde 3-phosphate and beta-D-fructose 6-phosphate from D-ribose 5-phosphate and D-xylulose 5-phosphate (non-oxidative stage): step 2/3. In terms of biological role, transaldolase is important for the balance of metabolites in the pentose-phosphate pathway. The sequence is that of Transaldolase from Vibrio vulnificus (strain CMCP6).